Reading from the N-terminus, the 130-residue chain is Small ribosomal subunit protein uS11c (130 aa).

The protein belongs to the universal ribosomal protein uS11 family. Part of the 30S ribosomal subunit.

The protein localises to the plastid. The protein resides in the chloroplast. The sequence is that of Small ribosomal subunit protein uS11c from Guillardia theta (Cryptophyte).